Consider the following 101-residue polypeptide: Chaperone modulatory protein CbpM (101 aa).

This sequence belongs to the CbpM family.

Functionally, interacts with CbpA and inhibits both the DnaJ-like co-chaperone activity and the DNA binding activity of CbpA. Together with CbpA, modulates the activity of the DnaK chaperone system. Does not inhibit the co-chaperone activity of DnaJ. In Salmonella paratyphi A (strain ATCC 9150 / SARB42), this protein is Chaperone modulatory protein CbpM.